Here is a 206-residue protein sequence, read N- to C-terminus: MARYIGPKCKLSRREGTDLFLKSGSRALESKCNVESAPGIHGQRRGRLSEYGTQLREKQKVRRIYGVLERQFSGYYKEASRRKGSTGENLLQLLECRLDNVVYRMGFGATRAESRQLISHKAITVNGQTVNIPSYQVKVGDVVAIREKAKNQLRIAQALELCAQRGRVEWVEVDTEKKSGVFKSVPARSDLSADINENLIVELYSK.

The S4 RNA-binding domain maps to 96 to 156 (CRLDNVVYRM…EKAKNQLRIA (61 aa)).

Belongs to the universal ribosomal protein uS4 family. As to quaternary structure, part of the 30S ribosomal subunit. Contacts protein S5. The interaction surface between S4 and S5 is involved in control of translational fidelity.

In terms of biological role, one of the primary rRNA binding proteins, it binds directly to 16S rRNA where it nucleates assembly of the body of the 30S subunit. With S5 and S12 plays an important role in translational accuracy. The sequence is that of Small ribosomal subunit protein uS4 from Azotobacter vinelandii (strain DJ / ATCC BAA-1303).